A 188-amino-acid polypeptide reads, in one-letter code: 3-deoxy-D-manno-octulosonate 8-phosphate phosphatase KdsC (188 aa).

2 residues coordinate Mg(2+): D32 and D34. Residues D34, 55-59 (NVRDG), R63, R78, R86, and K102 each bind substrate. D125 is a binding site for Mg(2+).

It belongs to the KdsC family. Homotetramer. Requires Mg(2+) as cofactor.

The catalysed reaction is 3-deoxy-alpha-D-manno-2-octulosonate-8-phosphate + H2O = 3-deoxy-alpha-D-manno-oct-2-ulosonate + phosphate. Its pathway is carbohydrate biosynthesis; 3-deoxy-D-manno-octulosonate biosynthesis; 3-deoxy-D-manno-octulosonate from D-ribulose 5-phosphate: step 3/3. It functions in the pathway bacterial outer membrane biogenesis; lipopolysaccharide biosynthesis. Catalyzes the hydrolysis of 3-deoxy-D-manno-octulosonate 8-phosphate (KDO 8-P) to 3-deoxy-D-manno-octulosonate (KDO) and inorganic phosphate. The chain is 3-deoxy-D-manno-octulosonate 8-phosphate phosphatase KdsC from Escherichia coli (strain K12).